Reading from the N-terminus, the 432-residue chain is Crenactin (432 aa).

Residues 20–24, 182–184, 235–239, 354–358, and glutamine 399 contribute to the ATP site; these read TSYVK, GGH, EVVKR, and GAFSW.

It belongs to the actin family. As to quaternary structure, monomer. The crenactin monomers polymerize into right-handed helical filaments, with 8 subunits per complete turn of the helix. Forms single-stranded filaments under high salt concentrations and double-stranded filaments under low salt concentrations. Interacts with arcadin-1 and arcadin-2.

It is found in the cytoplasm. The protein localises to the cytoskeleton. The catalysed reaction is ATP + H2O = ADP + phosphate + H(+). With respect to regulation, crenactin polymerization is inhibited by interaction with arcadin-2. Also significantly inhibited by elevated antibiotic A22 concentrations. In terms of biological role, forms the backbone of an actin-like archaeal cytoskeleton, which is involved in cell shape determination. Has ATPase activity. Shows highest activity towards ATP or GTP as nucleotide, and only residual activity on UTP, CTP and dNTPs. The protein is Crenactin of Pyrobaculum calidifontis (strain DSM 21063 / JCM 11548 / VA1).